Reading from the N-terminus, the 375-residue chain is Actin (375 aa).

The protein belongs to the actin family.

The protein localises to the cytoplasm. The protein resides in the cytoskeleton. The enzyme catalyses ATP + H2O = ADP + phosphate + H(+). In terms of biological role, actins are highly conserved proteins that are involved in various types of cell motility and are ubiquitously expressed in all eukaryotic cells. This chain is Actin, found in Sterkiella cavicola (Ciliate).